Here is a 458-residue protein sequence, read N- to C-terminus: Tyrosine phenol-lyase (458 aa).

Lys-258 carries the post-translational modification N6-(pyridoxal phosphate)lysine.

The protein belongs to the beta-eliminating lyase family. Homotetramer. It depends on pyridoxal 5'-phosphate as a cofactor.

It catalyses the reaction L-tyrosine + H2O = phenol + pyruvate + NH4(+). In Symbiobacterium thermophilum (strain DSM 24528 / JCM 14929 / IAM 14863 / T), this protein is Tyrosine phenol-lyase (tpl).